Consider the following 382-residue polypeptide: Lipid-A-disaccharide synthase (382 aa).

Belongs to the LpxB family.

It carries out the reaction 2-N,3-O-bis[(3R)-3-hydroxytetradecanoyl]-alpha-D-glucosaminyl 1-phosphate + UDP-2-N,3-O-bis[(3R)-3-hydroxytetradecanoyl]-alpha-D-glucosamine = lipid A disaccharide (E. coli) + UDP + H(+). The enzyme catalyses a lipid X + a UDP-2-N,3-O-bis[(3R)-3-hydroxyacyl]-alpha-D-glucosamine = a lipid A disaccharide + UDP + H(+). The protein operates within glycolipid biosynthesis; lipid IV(A) biosynthesis; lipid IV(A) from (3R)-3-hydroxytetradecanoyl-[acyl-carrier-protein] and UDP-N-acetyl-alpha-D-glucosamine: step 5/6. Condensation of UDP-2,3-diacylglucosamine and 2,3-diacylglucosamine-1-phosphate to form lipid A disaccharide, a precursor of lipid A, a phosphorylated glycolipid that anchors the lipopolysaccharide to the outer membrane of the cell. The protein is Lipid-A-disaccharide synthase of Escherichia fergusonii (strain ATCC 35469 / DSM 13698 / CCUG 18766 / IAM 14443 / JCM 21226 / LMG 7866 / NBRC 102419 / NCTC 12128 / CDC 0568-73).